Reading from the N-terminus, the 334-residue chain is MPKASLISIASYVPEKILTNFDFEKMVDTSDEWIVKRTGIEQRHIATTEITSDLGTKAAELAIKRSGLEKSQIDAVICATISPDHLCMPSTACKIAANLGLNFGITAFDISAACTGFIYLLELANSLIVSGAKKNVLIIGAEKLSSIIDYTDRSTCILFGDGAGAAVISASEENEIIDIHTASDGRQAELLITPGCGSAFPASDETLKNRLNFIHMSGNEVFKIAVQTLSKSVIEILHANKMQSEDIDFFIPHQANIRIIDAVKNRLNFTDEQCVLTVAKYGNTSSASIPMAINDAYEDGRIKNGSVLLLDAFGGGFTWGSAILKFGGRNFSDL.

Residues Cys-114 and His-253 contribute to the active site. The interval 254–258 (QANIR) is ACP-binding. The active site involves Asn-283.

The protein belongs to the thiolase-like superfamily. FabH family. Homodimer.

It localises to the cytoplasm. The catalysed reaction is malonyl-[ACP] + acetyl-CoA + H(+) = 3-oxobutanoyl-[ACP] + CO2 + CoA. The protein operates within lipid metabolism; fatty acid biosynthesis. Functionally, catalyzes the condensation reaction of fatty acid synthesis by the addition to an acyl acceptor of two carbons from malonyl-ACP. Catalyzes the first condensation reaction which initiates fatty acid synthesis and may therefore play a role in governing the total rate of fatty acid production. Possesses both acetoacetyl-ACP synthase and acetyl transacylase activities. Its substrate specificity determines the biosynthesis of branched-chain and/or straight-chain of fatty acids. The protein is Beta-ketoacyl-[acyl-carrier-protein] synthase III of Campylobacter concisus (strain 13826).